Reading from the N-terminus, the 318-residue chain is D-alanine--D-alanine ligase (318 aa).

In terms of domain architecture, ATP-grasp spans 116–311; that stretch reads KQVWQSLGIP…FQQLVLAILA (196 aa). 142-197 lines the ATP pocket; sequence STELGFPLIVKPAHEGSSIGMAKVNSAQELVAAWQDAAKYDSQVLVEQWIHGPEFT. The Mg(2+) site is built by D265, E278, and N280.

The protein belongs to the D-alanine--D-alanine ligase family. Mg(2+) is required as a cofactor. Requires Mn(2+) as cofactor.

The protein localises to the cytoplasm. The catalysed reaction is 2 D-alanine + ATP = D-alanyl-D-alanine + ADP + phosphate + H(+). It functions in the pathway cell wall biogenesis; peptidoglycan biosynthesis. In terms of biological role, cell wall formation. This chain is D-alanine--D-alanine ligase, found in Pseudomonas putida (strain GB-1).